The following is a 369-amino-acid chain: Protein HGH1 homolog (369 aa).

This sequence belongs to the HGH1 family.

This is Protein HGH1 homolog from Drosophila melanogaster (Fruit fly).